The primary structure comprises 907 residues: Avirulence protein A (907 aa).

Composition is skewed to polar residues over residues 1–11 and 124–136; these read MWNVSKSSNNL and AGSNGDINKSSDP. Disordered stretches follow at residues 1-47 and 116-157; these read MWNV…HDQL and NDDF…KKSY.

This Pseudomonas savastanoi pv. glycinea (Pseudomonas syringae pv. glycinea) protein is Avirulence protein A (avrA).